The chain runs to 399 residues: Cell division protein DivIB (399 aa).

Disordered stretches follow at residues 1 to 23 and 35 to 119; these read MSKDKKNEDKETLEELKELSEWQ and EEEA…ATKE. The Cytoplasmic segment spans residues 1–133; it reads MSKDKKNEDK…AKIPGIHILR (133 aa). Composition is skewed to basic and acidic residues over residues 35-65 and 75-119; these read EEEAALAEEKEKERQARMGEESEKSEDKQDQ and ESAK…ATKE. A helical membrane pass occupies residues 134-154; it reads AFTILFPSLLLLFVSAYLLSP. The Extracellular portion of the chain corresponds to 155–399; that stretch reads YATMKDIRVE…NQTTQRSSRR (245 aa). Positions 156-226 constitute a POTRA domain; it reads ATMKDIRVEG…TKFTIKVKEY (71 aa). A compositionally biased stretch (basic and acidic residues) spans 364–388; sequence KAKQEAKEAEKKQEEEQKKQEEESN. The disordered stretch occupies residues 364 to 399; sequence KAKQEAKEAEKKQEEEQKKQEEESNRNQTTQRSSRR. Residues 389–399 show a composition bias toward polar residues; that stretch reads RNQTTQRSSRR.

Belongs to the FtsQ/DivIB family. DivIB subfamily.

It localises to the cell membrane. Cell division protein that may be involved in stabilizing or promoting the assembly of the division complex. The polypeptide is Cell division protein DivIB (Streptococcus pneumoniae serotype 4 (strain ATCC BAA-334 / TIGR4)).